The following is a 114-amino-acid chain: Fumarate reductase subunit D (114 aa).

Transmembrane regions (helical) follow at residues 24 to 44 (VSAIFLPVVILIIGLLLPFGL), 50 to 70 (LITFAYSWIGKLVILVLTIFP), and 92 to 112 (GGFIFYGLATIYTVWVLFAVI).

This sequence belongs to the FrdD family. As to quaternary structure, part of an enzyme complex containing four subunits: a flavoprotein (FrdA), an iron-sulfur protein (FrdB), and two hydrophobic anchor proteins (FrdC and FrdD).

The protein resides in the cell inner membrane. In terms of biological role, anchors the catalytic components of the fumarate reductase complex to the cell membrane, binds quinones. The sequence is that of Fumarate reductase subunit D from Haemophilus influenzae (strain PittGG).